The following is a 242-amino-acid chain: uncharacterized protein (242 aa).

Residues Ser-57–Gly-67 show a composition bias toward polar residues. The tract at residues Ser-57–Ser-78 is disordered. One can recognise a DUF1279 domain in the interval Asp-76 to Lys-188. Residues Tyr-92 to Ala-114 traverse the membrane as a helical segment. Residues Lys-188–Phe-237 adopt a coiled-coil conformation. Residues Thr-198–Ser-236 show a composition bias toward basic and acidic residues. The interval Thr-198–Glu-242 is disordered.

The protein localises to the membrane. This is an uncharacterized protein from Danio rerio (Zebrafish).